A 287-amino-acid polypeptide reads, in one-letter code: MKSRLFIISQYLLPHHLLSRLAGCVAECRARWFKNAFTAWFAKRYQVNMSEALVEDLSAYEHFNAFFTRALKPGARPLDETPGAILCPADGAVSQLGPIEHGRIFQAKGHGFSAQELLGGDPAMAAPFMGGEFATIYLSPKDYHRVHMPLAGTLREMVYVPGRLFSVNQTTAENVPELFARNERVVCLFDTERGPMAVVLVGAMIVASIETVWAGLVTPPKRELKTFRYDEASRAPIHLEKGAELGRFKLGSTAIVLFGPEQVRWAESLGAGSAVRMGQLLAEPVQA.

Residues aspartate 90, histidine 147, and serine 252 each act as charge relay system; for autoendoproteolytic cleavage activity in the active site. The active-site Schiff-base intermediate with substrate; via pyruvic acid; for decarboxylase activity is serine 252. At serine 252 the chain carries Pyruvic acid (Ser); by autocatalysis.

The protein belongs to the phosphatidylserine decarboxylase family. PSD-B subfamily. Prokaryotic type I sub-subfamily. As to quaternary structure, heterodimer of a large membrane-associated beta subunit and a small pyruvoyl-containing alpha subunit. Requires pyruvate as cofactor. Post-translationally, is synthesized initially as an inactive proenzyme. Formation of the active enzyme involves a self-maturation process in which the active site pyruvoyl group is generated from an internal serine residue via an autocatalytic post-translational modification. Two non-identical subunits are generated from the proenzyme in this reaction, and the pyruvate is formed at the N-terminus of the alpha chain, which is derived from the carboxyl end of the proenzyme. The autoendoproteolytic cleavage occurs by a canonical serine protease mechanism, in which the side chain hydroxyl group of the serine supplies its oxygen atom to form the C-terminus of the beta chain, while the remainder of the serine residue undergoes an oxidative deamination to produce ammonia and the pyruvoyl prosthetic group on the alpha chain. During this reaction, the Ser that is part of the protease active site of the proenzyme becomes the pyruvoyl prosthetic group, which constitutes an essential element of the active site of the mature decarboxylase.

It localises to the cell membrane. It carries out the reaction a 1,2-diacyl-sn-glycero-3-phospho-L-serine + H(+) = a 1,2-diacyl-sn-glycero-3-phosphoethanolamine + CO2. The protein operates within phospholipid metabolism; phosphatidylethanolamine biosynthesis; phosphatidylethanolamine from CDP-diacylglycerol: step 2/2. In terms of biological role, catalyzes the formation of phosphatidylethanolamine (PtdEtn) from phosphatidylserine (PtdSer). The protein is Phosphatidylserine decarboxylase proenzyme of Pseudomonas putida (strain GB-1).